Reading from the N-terminus, the 326-residue chain is MTHSCRLSVAPMLDWTDRHCRYFHRLMTKETLLYTEMVTTGAIIHGKGDFLAYNEEEHPLALQLGGSNPEDLAKCAKLAQERGYDEINLNVGCPSDRVQNGRFGACLMAEPQLVADCVAAMKEVVDVPVTVKTRIGIDDQDSYEFLTDFVSIVSEKGGCEQFTIHARKAWLSGLSPKENREIPPLDYPRAYQLKQDFSHLTIAINGGVKSLEEAKVHLQHLDGVMIGREAYQSPYLLASVDQELFGSNAPVKKRSEIVEEMYPYIEAQLAKGAYLGHITRHMLGLFQNMPGARQWRRHISENAHKPGSGLEVLQDALAKIPKELNV.

Residues 11-13 (PML) and Gln-63 each bind FMN. Catalysis depends on Cys-93, which acts as the Proton donor. FMN contacts are provided by residues Lys-132, His-165, 205 to 207 (NGG), and 227 to 228 (GR).

This sequence belongs to the Dus family. DusA subfamily. FMN is required as a cofactor.

It carries out the reaction 5,6-dihydrouridine(20) in tRNA + NADP(+) = uridine(20) in tRNA + NADPH + H(+). The enzyme catalyses 5,6-dihydrouridine(20) in tRNA + NAD(+) = uridine(20) in tRNA + NADH + H(+). It catalyses the reaction 5,6-dihydrouridine(20a) in tRNA + NADP(+) = uridine(20a) in tRNA + NADPH + H(+). The catalysed reaction is 5,6-dihydrouridine(20a) in tRNA + NAD(+) = uridine(20a) in tRNA + NADH + H(+). Its function is as follows. Catalyzes the synthesis of 5,6-dihydrouridine (D), a modified base found in the D-loop of most tRNAs, via the reduction of the C5-C6 double bond in target uridines. Specifically modifies U20 and U20a in tRNAs. The chain is tRNA-dihydrouridine(20/20a) synthase from Vibrio parahaemolyticus serotype O3:K6 (strain RIMD 2210633).